We begin with the raw amino-acid sequence, 321 residues long: Porphobilinogen deaminase (321 aa).

Cys243 is modified (S-(dipyrrolylmethanemethyl)cysteine).

It belongs to the HMBS family. Monomer. Requires dipyrromethane as cofactor.

The enzyme catalyses 4 porphobilinogen + H2O = hydroxymethylbilane + 4 NH4(+). Its pathway is porphyrin-containing compound metabolism; protoporphyrin-IX biosynthesis; coproporphyrinogen-III from 5-aminolevulinate: step 2/4. Functionally, tetrapolymerization of the monopyrrole PBG into the hydroxymethylbilane pre-uroporphyrinogen in several discrete steps. The polypeptide is Porphobilinogen deaminase (Histophilus somni (strain 129Pt) (Haemophilus somnus)).